Consider the following 506-residue polypeptide: Maturase K (506 aa).

Belongs to the intron maturase 2 family. MatK subfamily.

Its subcellular location is the plastid. The protein resides in the chloroplast. In terms of biological role, usually encoded in the trnK tRNA gene intron. Probably assists in splicing its own and other chloroplast group II introns. The protein is Maturase K of Rhododendron tomentosum (Marsh Labrador tea).